A 327-amino-acid polypeptide reads, in one-letter code: Gibberellin 2-beta-dioxygenase 1 (327 aa).

The Fe2OG dioxygenase domain maps to 171–276 (QSDCLFRVNH…RLSMIYFCGP (106 aa)). 3 residues coordinate Fe cation: histidine 200, aspartate 202, and histidine 257. Arginine 267 is an active-site residue.

The protein belongs to the iron/ascorbate-dependent oxidoreductase family. GA2OX subfamily. Fe cation is required as a cofactor. As to expression, predominantly expressed in roots, flowers, young fruits and seeds.

It carries out the reaction gibberellin A1 + 2-oxoglutarate + O2 = gibberellin A8 + succinate + CO2. It participates in plant hormone biosynthesis; gibberellin biosynthesis. In terms of biological role, catalyzes the 2-beta-hydroxylation of several biologically active gibberellins, leading to the homeostatic regulation of their endogenous level. Catabolism of gibberellins (GAs) plays a central role in plant development. Converts GA9/GA20 to GA51/GA29 and GA4/GA1 to GA34/GA8. In Pisum sativum (Garden pea), this protein is Gibberellin 2-beta-dioxygenase 1 (GA2OX1).